The following is a 679-amino-acid chain: UvrABC system protein B (679 aa).

The 388-residue stretch at 25 to 412 (EGVNQGQRYQ…DGHLAEQVIR (388 aa)) folds into the Helicase ATP-binding domain. ATP is bound at residue 38 to 45 (GATGTGKT). Residues 91 to 114 (YYDYYQPEAYVPVSDTYIAKTSSI) carry the Beta-hairpin motif. In terms of domain architecture, Helicase C-terminal spans 429–591 (QVDDLLAEIR…IVPRPAGKRA (163 aa)). One can recognise a UVR domain in the interval 639–674 (PELIDQLETKMKEAAKNLNFEEAASLRDRIKKFRQK).

The protein belongs to the UvrB family. In terms of assembly, forms a heterotetramer with UvrA during the search for lesions. Interacts with UvrC in an incision complex.

It is found in the cytoplasm. Functionally, the UvrABC repair system catalyzes the recognition and processing of DNA lesions. A damage recognition complex composed of 2 UvrA and 2 UvrB subunits scans DNA for abnormalities. Upon binding of the UvrA(2)B(2) complex to a putative damaged site, the DNA wraps around one UvrB monomer. DNA wrap is dependent on ATP binding by UvrB and probably causes local melting of the DNA helix, facilitating insertion of UvrB beta-hairpin between the DNA strands. Then UvrB probes one DNA strand for the presence of a lesion. If a lesion is found the UvrA subunits dissociate and the UvrB-DNA preincision complex is formed. This complex is subsequently bound by UvrC and the second UvrB is released. If no lesion is found, the DNA wraps around the other UvrB subunit that will check the other stand for damage. The chain is UvrABC system protein B from Prochlorococcus marinus (strain MIT 9313).